Reading from the N-terminus, the 637-residue chain is DNA damage-binding protein CMR1 (637 aa).

Disordered regions lie at residues 1-91 (MIES…EEEA) and 144-168 (LVDTKDENKRRSANKPDPQFSTERR). Composition is skewed to basic and acidic residues over residues 8 to 23 (EQERLKNIRENERLMK) and 74 to 91 (AGHEADSETLKRKYEEEA). WD repeat units lie at residues 185–226 (VTPK…FASN), 255–295 (HARS…SEEI), 297–321 (AGEEDVLLSIFDVLSPSTHPSVYMD), 361–401 (VCEK…SVVK), and 431–470 (KARQACTSVDFSPRGDQLVGVSYDDVVKVWSMEPGSLFSE). Disordered stretches follow at residues 482–508 (SNKPKGAVKKQVPDSASDTGPGLLSWL) and 525–549 (KQEQDAPSPSLSKRPDDVLANPTRI). WD repeat units follow at residues 556–598 (GKWL…LRSL) and 602–637 (NLVTAVPAVTCMHPVLPARLVTGNASGRCTFWSPDP).

Belongs to the WD repeat DDB2/WDR76 family.

In terms of biological role, DNA-binding protein that binds to both single- and double-stranded DNA. Binds preferentially to UV-damaged DNA. May be involved in DNA-metabolic processes. In Mycosarcoma maydis (Corn smut fungus), this protein is DNA damage-binding protein CMR1.